The chain runs to 647 residues: Nucleoside triphosphatase I (647 aa).

Residues 48–213 (FIGLSELNSL…KYLINLLRPK (166 aa)) form the Helicase ATP-binding domain. ATP is bound at residue 61 to 68 (WDTGYGKT). Positions 150–153 (DEVH) match the DEXH box motif. The region spanning 377–540 (YIEACKIILN…KINVLNSFMK (164 aa)) is the Helicase C-terminal domain. Positions 466–532 (DIIILDLPWK…DLIKSKQDKI (67 aa)) are binding to the cap-specific mRNA (nucleoside-2'-O-)-methyltransferase.

This sequence belongs to the helicase family. NPH I subfamily. As to quaternary structure, monomer. Interacts (via C-terminus) with RAP94 (via N-terminus). Interacts with the cap-specific mRNA (nucleoside-2'-O-)-methyltransferase.

It localises to the virion. It catalyses the reaction a ribonucleoside 5'-triphosphate + H2O = a ribonucleoside 5'-diphosphate + phosphate + H(+). Its function is as follows. DNA-dependent ATPase required for providing the needed energy to achieve the termination of early transcripts. Acts in concert with the RAP94 subunit of the virion RNA polymerase and the capping enzyme/VTF to catalyze release of UUUUUNU-containing nascent RNA from the elongation complex. NPH-I must bind ssDNA in order to exhibit ATPase activity. The chain is Nucleoside triphosphatase I (NPH1) from Melanoplus sanguinipes entomopoxvirus (MsEPV).